A 245-amino-acid polypeptide reads, in one-letter code: Carboxy-S-adenosyl-L-methionine synthase (245 aa).

Residues Tyr42, 67 to 69 (GCS), 92 to 93 (DN), 120 to 121 (DI), Asn135, and Arg202 contribute to the S-adenosyl-L-methionine site.

Belongs to the class I-like SAM-binding methyltransferase superfamily. Cx-SAM synthase family. Homodimer.

It catalyses the reaction prephenate + S-adenosyl-L-methionine = carboxy-S-adenosyl-L-methionine + 3-phenylpyruvate + H2O. Catalyzes the conversion of S-adenosyl-L-methionine (SAM) to carboxy-S-adenosyl-L-methionine (Cx-SAM). The polypeptide is Carboxy-S-adenosyl-L-methionine synthase (Vibrio campbellii (strain ATCC BAA-1116)).